The chain runs to 1180 residues: Protocadherin-12 (1180 aa).

The signal sequence occupies residues 1–17; sequence MMLLLPFLLGLLGPGSY. Topologically, residues 18 to 716 are extracellular; it reads LFISGDCQEV…HEPGVLSTPA (699 aa). Cadherin domains lie at 28 to 135, 136 to 244, 245 to 352, 355 to 460, and 461 to 565; these read ATVM…QPQF, PKDE…SPVF, AESS…APSI, TWAS…APVF, and EKSR…APEV. N-linked (GlcNAc...) asparagine glycosylation is found at Asn-265 and Asn-415. N-linked (GlcNAc...) asparagine glycans are attached at residues Asn-582, Asn-659, and Asn-662. One can recognise a Cadherin 6 domain in the interval 600–711; that stretch reads PAGTGIPPKA…LRDSAHEPGV (112 aa). The helical transmembrane segment at 717–737 threads the bilayer; sequence LALICLAVLLAIFGLLLALFV. The Cytoplasmic portion of the chain corresponds to 738–1180; sequence SICRTERKDN…ESRLGCGRNL (443 aa). 2 disordered regions span residues 857-930 and 973-1026; these read NASR…GPHQ and QFQP…PEED. Ser-859 bears the Phosphoserine mark. The segment covering 904–918 has biased composition (polar residues); it reads PASSATLRRQRNFNG. The span at 1014-1026 shows a compositional bias: acidic residues; sequence PDLEEGPPSPEED. Position 1064 is a phosphoserine (Ser-1064). A compositionally biased stretch (polar residues) spans 1076-1093; the sequence is SSPDATTSEEPRTFQTFG. Disordered regions lie at residues 1076-1104 and 1156-1180; these read SSPD…ELSP and SGAS…GRNL.

Post-translationally, N-glycosylated. In terms of processing, cleaved by ADAM10 close to the transmembrane domain to release the Protocadherin-12, secreted form in the serum. Cleavage results in reduced cellular adhesion in a cell migration assay. Expressed in endothelial cells: localizes in vasculogenic rather than angiogenic endothelium. Strongly expressed in a subset of invasive cells of the placenta, named glycogen-rich trophoblasts cells (at protein level). glycogen-rich trophoblasts cells originate from the from the ectoplacental cone where they rapidly form tight islets (at protein level). In adult mice, present at high level in mesangial cells of kidney glomeruli, while expression was not detected in other types of perivascular cells.

Its subcellular location is the cell membrane. The protein localises to the cell junction. It localises to the secreted. Its function is as follows. Cellular adhesion molecule that may play an important role in cell-cell interactions at interendothelial junctions. Acts as a regulator of cell migration, probably via increasing cell-cell adhesion. Promotes homotypic calcium-dependent aggregation and adhesion and clusters at intercellular junctions. Unable to bind to catenins, weakly associates with the cytoskeleton. The polypeptide is Protocadherin-12 (Mus musculus (Mouse)).